The following is a 479-amino-acid chain: GTPase Obg (479 aa).

An Obg domain is found at 2-159 (TTFVDRVELH…QDIVLELKTV (158 aa)). The interval 61–87 (HHKPHRSATNGKPGEGGNRSGKDGQDL) is disordered. The OBG-type G domain maps to 160-331 (ADVALVGYPS…LSFALAELVG (172 aa)). GTP contacts are provided by residues 166–173 (GYPSAGKS), 191–195 (FTTLV), 212–215 (DVPG), 283–286 (NKID), and 312–314 (SAV). 2 residues coordinate Mg(2+): Ser173 and Thr193. The 83-residue stretch at 349–431 (PKAVDDAGFT…DNAVVFDWEP (83 aa)) folds into the OCT domain. Over residues 440-453 (LGRRGEDHRLDEPR) the composition is skewed to basic and acidic residues. Positions 440–479 (LGRRGEDHRLDEPRPAAQRRRDKQAERDDAEKEYDDFEPF) are disordered. Acidic residues predominate over residues 470–479 (EKEYDDFEPF).

Belongs to the TRAFAC class OBG-HflX-like GTPase superfamily. OBG GTPase family. In terms of assembly, monomer. The cofactor is Mg(2+).

It localises to the cytoplasm. An essential GTPase which binds GTP, GDP and possibly (p)ppGpp with moderate affinity, with high nucleotide exchange rates and a fairly low GTP hydrolysis rate. Plays a role in control of the cell cycle, stress response, ribosome biogenesis and in those bacteria that undergo differentiation, in morphogenesis control. This Streptomyces avermitilis (strain ATCC 31267 / DSM 46492 / JCM 5070 / NBRC 14893 / NCIMB 12804 / NRRL 8165 / MA-4680) protein is GTPase Obg.